The following is a 188-amino-acid chain: MLLIDNGIEKMALKLQQRQNLSHIEFLKVRLGMQVVVINTFKAIVTYGLALLLNIFLYTLIVHLTFLTLRTYSHGAHAKTSMLCHVQNIVAFVMLPWLIVQYDISFQFLLILSLLSALIVIKYAPAATKKRPIAPKKVKGLKIKSIIVFVLLMTIACIVPPPYNRFVVYGVLLQSFTLLPIFSIKEEV.

4 helical membrane-spanning segments follow: residues leucine 49–leucine 69, isoleucine 104–alanine 126, isoleucine 143–tyrosine 163, and phenylalanine 166–glutamate 186.

Belongs to the AgrB family.

The protein localises to the cell membrane. Essential for the production of a quorum sensing system signal molecule, the autoinducing peptide (AIP). This quorum sensing system is responsible for the regulation of the expression of virulence factor genes. Involved in the proteolytic processing of AgrD, the precursor of AIP. The chain is Accessory gene regulator protein B from Staphylococcus intermedius.